The primary structure comprises 260 residues: tRNA pseudouridine synthase A (260 aa).

Residue D52 is the Nucleophile of the active site. A substrate-binding site is contributed by Y110.

This sequence belongs to the tRNA pseudouridine synthase TruA family. Homodimer.

The catalysed reaction is uridine(38/39/40) in tRNA = pseudouridine(38/39/40) in tRNA. Formation of pseudouridine at positions 38, 39 and 40 in the anticodon stem and loop of transfer RNAs. The sequence is that of tRNA pseudouridine synthase A from Thiobacillus denitrificans (strain ATCC 25259 / T1).